The chain runs to 528 residues: Peptide chain release factor 3 (528 aa).

A tr-type G domain is found at 11-279 (SRRRTFAIIS…GLVDWAPSPQ (269 aa)). Residues 20-27 (SHPDAGKT), 88-92 (DTPGH), and 142-145 (NKLD) each bind GTP.

The protein belongs to the TRAFAC class translation factor GTPase superfamily. Classic translation factor GTPase family. PrfC subfamily.

Its subcellular location is the cytoplasm. Its function is as follows. Increases the formation of ribosomal termination complexes and stimulates activities of RF-1 and RF-2. It binds guanine nucleotides and has strong preference for UGA stop codons. It may interact directly with the ribosome. The stimulation of RF-1 and RF-2 is significantly reduced by GTP and GDP, but not by GMP. This chain is Peptide chain release factor 3, found in Pseudoalteromonas atlantica (strain T6c / ATCC BAA-1087).